Here is a 113-residue protein sequence, read N- to C-terminus: Large ribosomal subunit protein uL22 (113 aa).

The protein belongs to the universal ribosomal protein uL22 family. As to quaternary structure, part of the 50S ribosomal subunit.

Its function is as follows. This protein binds specifically to 23S rRNA; its binding is stimulated by other ribosomal proteins, e.g. L4, L17, and L20. It is important during the early stages of 50S assembly. It makes multiple contacts with different domains of the 23S rRNA in the assembled 50S subunit and ribosome. Functionally, the globular domain of the protein is located near the polypeptide exit tunnel on the outside of the subunit, while an extended beta-hairpin is found that lines the wall of the exit tunnel in the center of the 70S ribosome. The polypeptide is Large ribosomal subunit protein uL22 (Geobacillus sp. (strain WCH70)).